Here is a 25-residue protein sequence, read N- to C-terminus: Snaclec bothroalternin subunit alpha/beta (25 aa).

Residues 1–25 (DCPSDWSNHEGHCYRVFNEWMNWAD) enclose the C-type lectin domain. Residues cysteine 2 and cysteine 13 are joined by a disulfide bond.

This sequence belongs to the snaclec family. As to quaternary structure, heterodimer of subunits alpha and beta; disulfide-linked. In terms of tissue distribution, expressed by the venom gland.

It is found in the secreted. In terms of biological role, thrombin (F2) inhibitor that inhibits aggregation of rabbit platelets induced by alpha-thrombin. The polypeptide is Snaclec bothroalternin subunit alpha/beta (Bothrops alternatus (Urutu)).